A 312-amino-acid chain; its full sequence is Malate dehydrogenase (312 aa).

Residues 7 to 13 (GAAGGIG) and Asp34 contribute to the NAD(+) site. 2 residues coordinate substrate: Arg81 and Arg87. NAD(+) is bound by residues Asn94 and 117–119 (ITN). Substrate contacts are provided by Asn119 and Arg153. Catalysis depends on His177, which acts as the Proton acceptor. Residue Met227 participates in NAD(+) binding.

Belongs to the LDH/MDH superfamily. MDH type 1 family. In terms of assembly, homodimer.

The catalysed reaction is (S)-malate + NAD(+) = oxaloacetate + NADH + H(+). Catalyzes the reversible oxidation of malate to oxaloacetate. The protein is Malate dehydrogenase of Citrobacter koseri (strain ATCC BAA-895 / CDC 4225-83 / SGSC4696).